We begin with the raw amino-acid sequence, 467 residues long: Asparagine--tRNA ligase (467 aa).

Belongs to the class-II aminoacyl-tRNA synthetase family. Homodimer.

It is found in the cytoplasm. The catalysed reaction is tRNA(Asn) + L-asparagine + ATP = L-asparaginyl-tRNA(Asn) + AMP + diphosphate + H(+). In Actinobacillus succinogenes (strain ATCC 55618 / DSM 22257 / CCUG 43843 / 130Z), this protein is Asparagine--tRNA ligase.